Reading from the N-terminus, the 263-residue chain is 3-methyl-2-oxobutanoate hydroxymethyltransferase (263 aa).

Residues aspartate 45 and aspartate 84 each contribute to the Mg(2+) site. 3-methyl-2-oxobutanoate-binding positions include 45 to 46 (DS), aspartate 84, and lysine 112. Residue glutamate 114 participates in Mg(2+) binding. The active-site Proton acceptor is the glutamate 180.

The protein belongs to the PanB family. As to quaternary structure, homodecamer; pentamer of dimers. The cofactor is Mg(2+).

It is found in the cytoplasm. The catalysed reaction is 3-methyl-2-oxobutanoate + (6R)-5,10-methylene-5,6,7,8-tetrahydrofolate + H2O = 2-dehydropantoate + (6S)-5,6,7,8-tetrahydrofolate. It participates in cofactor biosynthesis; (R)-pantothenate biosynthesis; (R)-pantoate from 3-methyl-2-oxobutanoate: step 1/2. Catalyzes the reversible reaction in which hydroxymethyl group from 5,10-methylenetetrahydrofolate is transferred onto alpha-ketoisovalerate to form ketopantoate. This Citrobacter koseri (strain ATCC BAA-895 / CDC 4225-83 / SGSC4696) protein is 3-methyl-2-oxobutanoate hydroxymethyltransferase.